The following is a 651-amino-acid chain: Acetyl-coenzyme A synthetase (651 aa).

CoA is bound by residues Arg-193–Arg-196, Thr-313, and Asn-337. Residues Gly-389 to Pro-391, Asp-413 to Thr-418, Asp-502, and Arg-517 each bind ATP. Ser-525 provides a ligand contact to CoA. Arg-528 contributes to the ATP binding site. Val-539, His-541, and Val-544 together coordinate Mg(2+). CoA is bound at residue Arg-586. Lys-611 bears the N6-acetyllysine mark.

It belongs to the ATP-dependent AMP-binding enzyme family. Mg(2+) is required as a cofactor. In terms of processing, acetylated. Deacetylation by the SIR2-homolog deacetylase activates the enzyme.

It carries out the reaction acetate + ATP + CoA = acetyl-CoA + AMP + diphosphate. In terms of biological role, catalyzes the conversion of acetate into acetyl-CoA (AcCoA), an essential intermediate at the junction of anabolic and catabolic pathways. AcsA undergoes a two-step reaction. In the first half reaction, AcsA combines acetate with ATP to form acetyl-adenylate (AcAMP) intermediate. In the second half reaction, it can then transfer the acetyl group from AcAMP to the sulfhydryl group of CoA, forming the product AcCoA. In Shewanella denitrificans (strain OS217 / ATCC BAA-1090 / DSM 15013), this protein is Acetyl-coenzyme A synthetase.